Reading from the N-terminus, the 470-residue chain is E3 SUMO-protein ligase EGR2 (470 aa).

Positions 126–141 (PPASTTASSSVTSASP) are enriched in low complexity. Disordered regions lie at residues 126 to 153 (PPASTTASSSVTSASPNPLATGPLGVCT), 159 to 178 (PELDHLYSPPPPPPPYSGCT), and 185 to 210 (PSAFLSPPSTTSTSSLAYQPPPSYPS). A compositionally biased stretch (low complexity) spans 190-202 (SPPSTTSTSSLAY). Residue Lys247 is modified to N6-acetyllysine; by EP300. The span at 275 to 291 (GPGAGVTGPGASGGGEG) shows a compositional bias: gly residues. Residues 275-345 (GPGAGVTGPG…PYPCPAEGCD (71 aa)) form a disordered region. 3 consecutive C2H2-type zinc fingers follow at residues 337–361 (YPCPAEGCDRRFSRSDELTRHIRIH), 367–389 (FQCRICMRNFSRSDHLTTHIRTH), and 395–417 (FACDYCGRKFARSDERKRHTKIH). The segment at 408-470 (DERKRHTKIH…ASCTSRTRTP (63 aa)) is disordered. A compositionally biased stretch (basic residues) spans 412 to 422 (RHTKIHLRQKE). Residues 426–439 (SAPSAPPSAQSSAS) are compositionally biased toward low complexity. Over residues 440–450 (GPGGSQAGGSL) the composition is skewed to gly residues.

It belongs to the EGR C2H2-type zinc-finger protein family. In terms of assembly, interacts with HCFC1. Interacts with WWP2. Interacts with UBC9. Interacts with CITED1. Interacts (via phosphorylated form) with SFN. Ubiquitinated by WWP2 leading to proteasomal degradation. In terms of processing, acetylated at Lys-247. May be deacetylated by HDAC6, HDAC10 or SIRT1. Expressed mainly in the thymus.

It localises to the nucleus. It functions in the pathway protein modification; protein sumoylation. Its function is as follows. Sequence-specific DNA-binding transcription factor. Plays a role in hindbrain segmentation by regulating the expression of a subset of homeobox containing genes and in Schwann cell myelination by regulating the expression of genes involved in the formation and maintenance of myelin. Binds to two EGR2-consensus sites EGR2A (5'-CTGTAGGAG-3') and EGR2B (5'-ATGTAGGTG-3') in the HOXB3 enhancer and promotes HOXB3 transcriptional activation. Binds to specific DNA sites located in the promoter region of HOXA4, HOXB2 and ERBB2. Regulates hindbrain segmentation by controlling the expression of Hox genes, such as HOXA4, HOXB3 and HOXB2, and thereby specifying odd and even rhombomeres. Promotes the expression of HOXB3 in the rhombomere r5 and of HOXB3 in r3 and r5 in the hindbrain. Regulates myelination in the peripheral nervous system after birth, possibly by regulating the expression of myelin proteins, such as MPZ, and by promoting the differentiation of Schwann cells. Involved in the development of the jaw openener musculature, probably by playing a role in its innervation through trigeminal motor neurons. May play a role in adipogenesis, possibly by regulating the expression of CEBPB. Functionally, E3 SUMO-protein ligase helping SUMO1 conjugation to its coregulators NAB1 and NAB2, whose sumoylation down-regulates EGR2 transcriptional activity. This is E3 SUMO-protein ligase EGR2 (Egr2) from Mus musculus (Mouse).